Reading from the N-terminus, the 125-residue chain is Fluoride-specific ion channel FluC (125 aa).

A run of 4 helical transmembrane segments spans residues 5–25 (LLVA…GALV), 29–49 (LGAG…FLIG), 66–86 (LFLA…SYET), and 95–115 (VGKA…LAFL). Na(+)-binding residues include Gly-74 and Thr-77.

It belongs to the fluoride channel Fluc/FEX (TC 1.A.43) family.

The protein resides in the cell inner membrane. The catalysed reaction is fluoride(in) = fluoride(out). Its activity is regulated as follows. Na(+) is not transported, but it plays an essential structural role and its presence is essential for fluoride channel function. Fluoride-specific ion channel. Important for reducing fluoride concentration in the cell, thus reducing its toxicity. This Thermus thermophilus (strain ATCC 27634 / DSM 579 / HB8) protein is Fluoride-specific ion channel FluC.